A 530-amino-acid chain; its full sequence is White collar 2 protein (530 aa).

7 repeat units span residues glycine 9–methionine 12, glycine 21–methionine 24, glycine 25–methionine 28, glycine 29–methionine 32, glycine 33–methionine 36, glycine 37–methionine 40, and glycine 41–methionine 44. The segment at glycine 9–methionine 44 is 7 X 4 AA repeats of G-[SAT]-G-M. The interval isoleucine 134 to glutamate 158 is disordered. Over residues proline 144–serine 154 the composition is skewed to gly residues. The PAS domain occupies arginine 162–glycine 232. The disordered stretch occupies residues arginine 315–aspartate 343. The GATA-type zinc-finger motif lies at cysteine 468–cysteine 493. Residues lysine 504–glycine 530 form a disordered region.

In terms of assembly, heterodimer of wc-1 and wc-2 (Potential). Binds to DNA.

It is found in the nucleus. In terms of biological role, may function as a transcription factor involved in light regulation. Binds and affects blue light regulation of the al-3 gene. Wc-1 and wc-2 interact via homologous PAS domains, bind to promoters of light regulated genes such as frq, and activate transcription. May bind directly to frq. This Neurospora crassa (strain ATCC 24698 / 74-OR23-1A / CBS 708.71 / DSM 1257 / FGSC 987) protein is White collar 2 protein (wc-2).